We begin with the raw amino-acid sequence, 420 residues long: 3-isopropylmalate dehydratase large subunit (420 aa).

3 residues coordinate [4Fe-4S] cluster: Cys300, Cys360, and Cys363.

The protein belongs to the aconitase/IPM isomerase family. LeuC type 2 subfamily. As to quaternary structure, heterodimer of LeuC and LeuD. [4Fe-4S] cluster is required as a cofactor.

The enzyme catalyses (2R,3S)-3-isopropylmalate = (2S)-2-isopropylmalate. It participates in amino-acid biosynthesis; L-leucine biosynthesis; L-leucine from 3-methyl-2-oxobutanoate: step 2/4. Functionally, catalyzes the isomerization between 2-isopropylmalate and 3-isopropylmalate, via the formation of 2-isopropylmaleate. This chain is 3-isopropylmalate dehydratase large subunit, found in Clostridium kluyveri (strain ATCC 8527 / DSM 555 / NBRC 12016 / NCIMB 10680 / K1).